The sequence spans 101 residues: uncharacterized protein (101 aa).

The signal sequence occupies residues 1–17; that stretch reads MKKAAVLAVVLSLGLAG. Cys18 carries N-palmitoyl cysteine lipidation. A lipid anchor (S-diacylglycerol cysteine) is attached at Cys18.

Its subcellular location is the cell membrane. This is an uncharacterized protein from Pasteurella multocida (strain Pm70).